Here is a 611-residue protein sequence, read N- to C-terminus: Chaperonin 60 subunit beta 4, chloroplastic (611 aa).

The N-terminal 37 residues, 1–37, are a transit peptide targeting the chloroplast; sequence MAFSQAALSALPLSDRTFRKKPSSSSSSSPNFVLRVR. A coiled-coil region spans residues 377 to 480; the sequence is QKAVDERVSQ…LDNTEQKIGA (104 aa). The tract at residues 574–595 is disordered; sequence INPPLPTSSPATSSMFPDRKLP.

This sequence belongs to the chaperonin (HSP60) family. In terms of assembly, part of the Cpn60 complex composed of 7 alpha and 7 beta subunits. Can also form a complex composed of 14 beta subunits only. Both complexes show ATPase activity. The Cpn60 complex interacts with the Cpn10 complex. Interacts with NDHH.

The protein localises to the plastid. The protein resides in the chloroplast stroma. Functionally, involved specifically in the folding of NDHH, a subunit of the chloroplast NADH dehydrogenase-like complex (NDH). The protein is Chaperonin 60 subunit beta 4, chloroplastic (CPN60B4) of Arabidopsis thaliana (Mouse-ear cress).